The primary structure comprises 432 residues: D-amino acid dehydrogenase (432 aa).

3–17 (VVILGSGVVGVASAW) serves as a coordination point for FAD.

It belongs to the DadA oxidoreductase family. It depends on FAD as a cofactor.

The catalysed reaction is a D-alpha-amino acid + A + H2O = a 2-oxocarboxylate + AH2 + NH4(+). The protein operates within amino-acid degradation; D-alanine degradation; NH(3) and pyruvate from D-alanine: step 1/1. Functionally, oxidative deamination of D-amino acids. This is D-amino acid dehydrogenase from Shigella dysenteriae serotype 1 (strain Sd197).